Reading from the N-terminus, the 197-residue chain is Histone chaperone asf1b-B (197 aa).

The protein belongs to the ASF1 family. In terms of assembly, interacts with histone H3 and histone H4.

It is found in the nucleus. Functionally, histone chaperone that facilitates histone deposition and histone exchange and removal during nucleosome assembly and disassembly. The protein is Histone chaperone asf1b-B (asf1bb) of Danio rerio (Zebrafish).